A 367-amino-acid chain; its full sequence is Zinc finger CCCH domain-containing protein 56 (367 aa).

The segment at 38 to 80 (YNSQWNADGGGGGSSRAGSEQPPPGKKSRGGGGGEGGGNTSKS) is disordered. Residues 67 to 76 (GGGGGEGGGN) show a composition bias toward gly residues. 3 C3H1-type zinc fingers span residues 87 to 114 (FFKT…HGME), 169 to 197 (AYKG…HDEQ), and 245 to 273 (NWKT…HGAA).

The chain is Zinc finger CCCH domain-containing protein 56 from Oryza sativa subsp. japonica (Rice).